A 111-amino-acid polypeptide reads, in one-letter code: Ribosome-binding factor A (111 aa).

Belongs to the RbfA family. Monomer. Binds 30S ribosomal subunits, but not 50S ribosomal subunits or 70S ribosomes.

The protein localises to the cytoplasm. One of several proteins that assist in the late maturation steps of the functional core of the 30S ribosomal subunit. Associates with free 30S ribosomal subunits (but not with 30S subunits that are part of 70S ribosomes or polysomes). Required for efficient processing of 16S rRNA. May interact with the 5'-terminal helix region of 16S rRNA. The chain is Ribosome-binding factor A from Helicobacter pylori (strain HPAG1).